We begin with the raw amino-acid sequence, 144 residues long: Putative pre-16S rRNA nuclease (144 aa).

Belongs to the YqgF nuclease family.

The protein localises to the cytoplasm. Its function is as follows. Could be a nuclease involved in processing of the 5'-end of pre-16S rRNA. In Oleidesulfovibrio alaskensis (strain ATCC BAA-1058 / DSM 17464 / G20) (Desulfovibrio alaskensis), this protein is Putative pre-16S rRNA nuclease.